The primary structure comprises 352 residues: F-box/kelch-repeat protein SKIP30 (352 aa).

The F-box domain occupies 9–55; the sequence is SGLLDGIPEAVALRCLAHVPLHLHPNLELVSRSWRAAIRSHELFRVR. Kelch repeat units lie at residues 57–109, 110–167, 168–215, 243–293, and 296–351; these read ELRS…TTAG, MLFV…VLQG, KIVV…LVVN, YGWP…MTSL, and EVLI…TQLT.

In terms of assembly, part of a SCF (ASK-cullin-F-box) protein ligase complex. Interacts with SKP1A/ASK1.

Its pathway is protein modification; protein ubiquitination. Functionally, component of SCF(ASK-cullin-F-box) E3 ubiquitin ligase complexes, which may mediate the ubiquitination and subsequent proteasomal degradation of target proteins. The sequence is that of F-box/kelch-repeat protein SKIP30 (SKIP30) from Arabidopsis thaliana (Mouse-ear cress).